We begin with the raw amino-acid sequence, 414 residues long: Wilms tumor protein homolog A (414 aa).

Residues K55 and K158 each participate in a glycyl lysine isopeptide (Lys-Gly) (interchain with G-Cter in SUMO) cross-link. Residues 217-225 (MTWNQMNLG) carry the 9aaTAD motif. 3 C2H2-type zinc fingers span residues 288–312 (FMCA…SRKH), 318–342 (YQCD…QRRH), and 348–370 (FQCK…TRTH). Important for interaction with target DNA stretches follow at residues 332–346 (SDQL…TGIK) and 358–366 (SRSDHLKTH). The KTS motif motif lies at 373–375 (KTS). The C2H2-type 4 zinc-finger motif lies at 379–403 (FSCRWPSCQKKFARSDELVRHHNMH).

The protein belongs to the EGR C2H2-type zinc-finger protein family. In terms of tissue distribution, expressed around the pronephric anlage and in the pronephros; expression is restricted to the splanchnic mesoderm (the site where the glomus forms) from tailbud stages, and the glomus of early tadpoles. Not expressed in the pronephric tubules or pronephric duct. In tadpoles (stage 38-39), additional expression begins in the heart. Also expressed in the adult kidney (mesonephros).

It is found in the nucleus. The protein localises to the cytoplasm. It localises to the nucleus speckle. Its function is as follows. Transcription factor required for development of the vascular component of the pronephric kidney, the glomus; may repress tubule-specific gene expression in the portion of the pronephros fated to form the glomus. Recognizes and binds to the DNA sequence 5'-GCG(T/G)GGGCG-3'. Inhibits Wnt-signaling during embryonic development. Function may be isoform-specific: the isoform containing the KTS motif is less effective in inhibiting wnt signaling. In Xenopus laevis (African clawed frog), this protein is Wilms tumor protein homolog A (wt1-a).